The chain runs to 181 residues: Large ribosomal subunit protein uL5 (181 aa).

The protein belongs to the universal ribosomal protein uL5 family. As to quaternary structure, part of the 50S ribosomal subunit; part of the 5S rRNA/L5/L18/L25 subcomplex. Contacts the 5S rRNA and the P site tRNA. Forms a bridge to the 30S subunit in the 70S ribosome.

Its function is as follows. This is one of the proteins that bind and probably mediate the attachment of the 5S RNA into the large ribosomal subunit, where it forms part of the central protuberance. In the 70S ribosome it contacts protein S13 of the 30S subunit (bridge B1b), connecting the 2 subunits; this bridge is implicated in subunit movement. Contacts the P site tRNA; the 5S rRNA and some of its associated proteins might help stabilize positioning of ribosome-bound tRNAs. The polypeptide is Large ribosomal subunit protein uL5 (Helicobacter pylori (strain P12)).